A 330-amino-acid polypeptide reads, in one-letter code: Glycerol-3-phosphate dehydrogenase [NAD(P)+] (330 aa).

Positions 14, 15, 35, and 109 each coordinate NADPH. 2 residues coordinate sn-glycerol 3-phosphate: Lys-109 and Gly-137. Ala-141 contacts NADPH. Positions 192, 248, 258, 259, and 260 each coordinate sn-glycerol 3-phosphate. Lys-192 (proton acceptor) is an active-site residue. Arg-259 serves as a coordination point for NADPH. Leu-283 and Glu-285 together coordinate NADPH.

Belongs to the NAD-dependent glycerol-3-phosphate dehydrogenase family.

It is found in the cytoplasm. The enzyme catalyses sn-glycerol 3-phosphate + NAD(+) = dihydroxyacetone phosphate + NADH + H(+). The catalysed reaction is sn-glycerol 3-phosphate + NADP(+) = dihydroxyacetone phosphate + NADPH + H(+). Its pathway is membrane lipid metabolism; glycerophospholipid metabolism. In terms of biological role, catalyzes the reduction of the glycolytic intermediate dihydroxyacetone phosphate (DHAP) to sn-glycerol 3-phosphate (G3P), the key precursor for phospholipid synthesis. The polypeptide is Glycerol-3-phosphate dehydrogenase [NAD(P)+] (Rickettsia massiliae (strain Mtu5)).